A 60-amino-acid polypeptide reads, in one-letter code: Metallothionein B (60 aa).

The segment at 1–28 is beta; that stretch reads MDPCECTKSGTCNCGGSCTCTNCSCTSC. A divalent metal cation-binding residues include cysteine 4, cysteine 6, cysteine 12, cysteine 14, cysteine 18, cysteine 20, cysteine 23, cysteine 25, cysteine 28, cysteine 32, cysteine 33, cysteine 35, cysteine 36, cysteine 40, cysteine 43, cysteine 47, cysteine 49, cysteine 54, cysteine 58, and cysteine 59. The interval 29 to 60 is alpha; the sequence is KKSCCPCCPSGCTKCASGCVCKGKTCDTSCCQ.

The protein belongs to the metallothionein superfamily. Type 1 family.

In terms of biological role, metallothioneins have a high content of cysteine residues that bind various heavy metals. This Chaenocephalus aceratus (Blackfin icefish) protein is Metallothionein B (mtb).